The primary structure comprises 136 residues: Phospholipase A2 (136 aa).

Residues W8, G10, and G12 each contribute to the Ca(2+) site. Disulfide bonds link C9–C31, C30–C70, C37–C63, C61–C95, and C105–C117. N16 carries an N-linked (GlcNAc...) asparagine glycan. H34 is an active-site residue. D35 contributes to the Ca(2+) binding site. The active site involves D64.

This sequence belongs to the phospholipase A2 family. The cofactor is Ca(2+). As to expression, expressed by the venom gland.

The protein localises to the secreted. The catalysed reaction is a 1,2-diacyl-sn-glycero-3-phosphocholine + H2O = a 1-acyl-sn-glycero-3-phosphocholine + a fatty acid + H(+). Functionally, PLA2 catalyzes the calcium-dependent hydrolysis of the 2-acyl groups in 3-sn-phosphoglycerides. The polypeptide is Phospholipase A2 (Bombus terrestris (Buff-tailed bumblebee)).